Here is a 308-residue protein sequence, read N- to C-terminus: Methionine synthase (308 aa).

Zn(2+) contacts are provided by His-201, Cys-203, Glu-224, and Cys-285.

Belongs to the archaeal MetE family. Zn(2+) serves as cofactor.

It functions in the pathway amino-acid biosynthesis; L-methionine biosynthesis via de novo pathway. In terms of biological role, catalyzes the transfer of a methyl group to L-homocysteine resulting in methionine formation. Can use methylcobalamin and methylcobinamide as methyl donors, but methylcobalamin is not considered to be the physiological substrate. This Methanothermobacter thermautotrophicus (strain ATCC 29096 / DSM 1053 / JCM 10044 / NBRC 100330 / Delta H) (Methanobacterium thermoautotrophicum) protein is Methionine synthase.